A 508-amino-acid chain; its full sequence is MLGVRRALLLPPLQLALLVAAGTGARVSAPRSLAWGPGLHADAVLPVRYFFLQSVDSDGRNFTSSPPGQTQFKVVVKSLSPKELVRIYVPKPLDRNDGTFLVRYRMHETVHEGLKIEILYGGEHVAQSPYILKGPVYHEYCDCPEDDPQAWQKTLSCPANEPQIEQDFISFPSINLQQMLKEVPKRFGDERGAIVHYTILNNHIYRRSLGKYTDFKMFSDEILLSLARKVTLPDLEFYINLGDWPLEHRKVNDTPGPIPIISWCGSLDSRDIILPTYDVTHSTLEAMRGVTNDLLSVQGNTGPSWINKTEKAFFRGRDSREERLQLVLLSKENPQLLDAGITGYFFFQEKEKELGKAKLMGFFDFFKYKYQVNVDGTVAAYRYPYLMLGDSLVLKQESPYYEHFYVELRPWKHYVPIKRNLSDLLEKVKWAKENDEEAKRIAKEGQLTARDLLQPPRLYCYYYRVLQKYAERQVSKPMIRDGMERVPQPDDSTSVRQCHRKRPEREEL.

The signal sequence occupies residues 1-24; that stretch reads MLGVRRALLLPPLQLALLVAAGTG. The Filamin repeat unit spans residues 25–134; sequence ARVSAPRSLA…VAQSPYILKG (110 aa). Residue asparagine 307 is glycosylated (N-linked (GlcNAc...) asparagine). The segment at 480-508 is disordered; the sequence is RDGMERVPQPDDSTSVRQCHRKRPEREEL. Positions 505–508 match the Prevents secretion from ER motif; that stretch reads REEL.

Belongs to the KDELC family.

It localises to the endoplasmic reticulum lumen. The enzyme catalyses L-seryl-[EGF-like domain protein] + UDP-alpha-D-glucose = 3-O-(beta-D-glucosyl)-L-seryl-[EGF-like domain protein] + UDP + H(+). It catalyses the reaction L-seryl-[EGF-like domain protein] + UDP-alpha-D-xylose = 3-O-(beta-D-xylosyl)-L-seryl-[EGF-like domain protein] + UDP + H(+). It participates in protein modification; protein glycosylation. Functionally, protein glucosyltransferase that catalyzes the transfer of glucose from UDP-glucose to a serine residue within the consensus sequence peptide C-X-N-T-X-G-S-F-X-C. Can also catalyze the transfer of xylose from UDP-xylose but less efficiently. Specifically targets extracellular EGF repeats of proteins such as NOTCH1, NOTCH3, FBN1, FBN2 and LTBP1. May regulate the transport of NOTCH1 and NOTCH3 to the plasma membrane and thereby the Notch signaling pathway. This is Protein O-glucosyltransferase 3 (Poglut3) from Rattus norvegicus (Rat).